Reading from the N-terminus, the 311-residue chain is MTLRLVFMGTPEFSVPTLRALAGAGHEITAIYTQPPRPAGRRGLELTRSPVHQAAEELDLYVRTPQSLKSEEEQQVFRELEADAAVVVAYGLLLPRAILEGTRLGAFNGHASLLPRWRGAAPIQRAIMAGDRETGMMVMKMDEGLDTGPIAMTEKIAIGPDMTAGELHDVMKLAGAGLMVAAIAALEQGELALTPQPATGVTYAKKIIKEETRVDWSRPAEEVHNHIRGLSPLPGAWCEMPAGDKAERVKLLRSTLSEGSGAPGEVIDEGLAIACGQGAVRLLELQRAGGKPVSAADFQRGSKLGRGTRLT.

112-115 (SLLP) lines the (6S)-5,6,7,8-tetrahydrofolate pocket.

The protein belongs to the Fmt family.

The enzyme catalyses L-methionyl-tRNA(fMet) + (6R)-10-formyltetrahydrofolate = N-formyl-L-methionyl-tRNA(fMet) + (6S)-5,6,7,8-tetrahydrofolate + H(+). Functionally, attaches a formyl group to the free amino group of methionyl-tRNA(fMet). The formyl group appears to play a dual role in the initiator identity of N-formylmethionyl-tRNA by promoting its recognition by IF2 and preventing the misappropriation of this tRNA by the elongation apparatus. This is Methionyl-tRNA formyltransferase from Chelativorans sp. (strain BNC1).